A 421-amino-acid polypeptide reads, in one-letter code: eIF5-mimic protein 1 (421 aa).

Residues 1–24 (MNTGKQQKPVLTGQRFKTRKRDEK) form a disordered region. The 168-residue stretch at 250–417 (TQQTLGTRKE…QNAEEESESE (168 aa)) folds into the W2 domain.

The protein belongs to the BZW family.

The protein resides in the cytoplasm. Functionally, translation initiation regulator which may repress non-AUG initiated translation and repeat-associated non-AUG (RAN) initiated translation by acting as a competitive inhibitor of eukaryotic translation initiation factor 5 (EIF5) function. The sequence is that of eIF5-mimic protein 1 (bzw2) from Danio rerio (Zebrafish).